The sequence spans 360 residues: Sphingolipid delta(4)-desaturase (360 aa).

A run of 3 helical transmembrane segments spans residues 67-87 (AVVLLQLSIAYALKNTPVLSF), 89-109 (FLALAYVVGATANQNCFLCIH), and 125-145 (LFAIWVNLPIGVPYSASFQPY). The short motif at 109-113 (HELSH) is the Histidine box-1 element. Residues 146-150 (HQLHH) carry the Histidine box-2 motif. The next 3 helical transmembrane spans lie at 170–190 (VLSSLLGKAFFATFQIFFYAL), 202–222 (FIHLLNVLVCLVSDFILIKFG), and 228–248 (WYLILSSFFAGSLHPTAGHFI). The short motif at 288–292 (HNEHH) is the Histidine box-3 element.

Belongs to the fatty acid desaturase type 1 family. DEGS subfamily.

It is found in the membrane. The enzyme catalyses an N-acylsphinganine + 2 Fe(II)-[cytochrome b5] + O2 + 2 H(+) = an N-acylsphing-4-enine + 2 Fe(III)-[cytochrome b5] + 2 H2O. The protein operates within lipid metabolism; sphingolipid metabolism. Delta(4)-fatty-acid desaturase which introduces a double bond at the 4-position in the long-chain base (LCB) of ceramides. Required for the formation of the monounsaturated sphingoid base (E)-sphing-4-enine during glucosylceramide (GluCer) biosynthesis. The sequence is that of Sphingolipid delta(4)-desaturase from Komagataella phaffii (strain GS115 / ATCC 20864) (Yeast).